A 387-amino-acid polypeptide reads, in one-letter code: Flap endonuclease 1 (387 aa).

The N-domain stretch occupies residues 1–104 (MGIKGLSQLI…GELEKRKERQ (104 aa)). Asp-34 contributes to the Mg(2+) binding site. Residue Arg-70 coordinates DNA. Residues Asp-86, Glu-158, Glu-160, Asp-179, and Asp-181 each coordinate Mg(2+). The segment at 122–253 (KMVMWNKRTT…KKALAMIKKY (132 aa)) is I-domain. Glu-158 lines the DNA pocket. Residues Gly-231 and Asp-233 each contribute to the DNA site. Asp-233 lines the Mg(2+) pocket. Residues 332–387 (SSRGKPTQTRLDGFFTPVASSSTTKKKAPAKKDDKKSATDKKRKAADASTSSKKKK) form a disordered region. The interaction with PCNA stretch occupies residues 338–346 (TQTRLDGFF). Basic and acidic residues predominate over residues 361-371 (AKKDDKKSATD). Over residues 378–387 (DASTSSKKKK) the composition is skewed to low complexity.

Belongs to the XPG/RAD2 endonuclease family. FEN1 subfamily. As to quaternary structure, interacts with PCNA. Three molecules of FEN1 bind to one PCNA trimer with each molecule binding to one PCNA monomer. PCNA stimulates the nuclease activity without altering cleavage specificity. The cofactor is Mg(2+). In terms of processing, phosphorylated. Phosphorylation upon DNA damage induces relocalization to the nuclear plasma.

It localises to the nucleus. Its subcellular location is the nucleolus. It is found in the nucleoplasm. The protein resides in the mitochondrion. Functionally, structure-specific nuclease with 5'-flap endonuclease and 5'-3' exonuclease activities involved in DNA replication and repair. During DNA replication, cleaves the 5'-overhanging flap structure that is generated by displacement synthesis when DNA polymerase encounters the 5'-end of a downstream Okazaki fragment. It enters the flap from the 5'-end and then tracks to cleave the flap base, leaving a nick for ligation. Also involved in the long patch base excision repair (LP-BER) pathway, by cleaving within the apurinic/apyrimidinic (AP) site-terminated flap. Acts as a genome stabilization factor that prevents flaps from equilibrating into structures that lead to duplications and deletions. Also possesses 5'-3' exonuclease activity on nicked or gapped double-stranded DNA, and exhibits RNase H activity. Also involved in replication and repair of rDNA and in repairing mitochondrial DNA. The sequence is that of Flap endonuclease 1 from Naegleria gruberi (Amoeba).